Here is a 210-residue protein sequence, read N- to C-terminus: Methylthioribulose-1-phosphate dehydratase (210 aa).

H94 and H96 together coordinate Zn(2+).

It belongs to the aldolase class II family. MtnB subfamily. It depends on Zn(2+) as a cofactor.

It carries out the reaction 5-(methylsulfanyl)-D-ribulose 1-phosphate = 5-methylsulfanyl-2,3-dioxopentyl phosphate + H2O. Its pathway is amino-acid biosynthesis; L-methionine biosynthesis via salvage pathway; L-methionine from S-methyl-5-thio-alpha-D-ribose 1-phosphate: step 2/6. Its function is as follows. Catalyzes the dehydration of methylthioribulose-1-phosphate (MTRu-1-P) into 2,3-diketo-5-methylthiopentyl-1-phosphate (DK-MTP-1-P). This Yersinia enterocolitica serotype O:8 / biotype 1B (strain NCTC 13174 / 8081) protein is Methylthioribulose-1-phosphate dehydratase.